Consider the following 96-residue polypeptide: MQVLVRDNNVDQALKALKKKMQREGIFREMKLRGHYEKPSEKKAREKAEAVRRARKLARKKLQREGLLPSKPKPVFGADRGRGAAGGAGGAPRPAR.

Residues 37–52 (EKPSEKKAREKAEAVR) are compositionally biased toward basic and acidic residues. Residues 37-96 (EKPSEKKAREKAEAVRRARKLARKKLQREGLLPSKPKPVFGADRGRGAAGGAGGAPRPAR) are disordered. Basic residues predominate over residues 53–62 (RARKLARKKL).

Belongs to the bacterial ribosomal protein bS21 family.

The polypeptide is Small ribosomal subunit protein bS21 (Afipia carboxidovorans (strain ATCC 49405 / DSM 1227 / KCTC 32145 / OM5) (Oligotropha carboxidovorans)).